The primary structure comprises 210 residues: Probable nicotinate-nucleotide adenylyltransferase (210 aa).

This sequence belongs to the NadD family.

The catalysed reaction is nicotinate beta-D-ribonucleotide + ATP + H(+) = deamido-NAD(+) + diphosphate. The protein operates within cofactor biosynthesis; NAD(+) biosynthesis; deamido-NAD(+) from nicotinate D-ribonucleotide: step 1/1. In terms of biological role, catalyzes the reversible adenylation of nicotinate mononucleotide (NaMN) to nicotinic acid adenine dinucleotide (NaAD). The protein is Probable nicotinate-nucleotide adenylyltransferase of Methylococcus capsulatus (strain ATCC 33009 / NCIMB 11132 / Bath).